The primary structure comprises 318 residues: Probable mitochondrial 2-oxoglutarate/malate carrier protein (318 aa).

Solcar repeat units follow at residues 22 to 111, 119 to 210, and 219 to 309; these read QSQL…IKDI, LPFT…TKQL, and DDIK…LNIL. 6 helical membrane passes run 28–48, 79–99, 125–145, 185–205, 225–245, and 281–301; these read FVIGGLAGMLSSAFTHPIDSL, GFFTLYKGLSASLLRQATYTT, IMVGMLSGAGGAIVGTPADLT, GCSPNLIRAMFMTAGQVSSYD, LIASTTAAFVAAVATSPLDVI, and FYKGFNPYFMRLGPQTILTFI.

This sequence belongs to the mitochondrial carrier (TC 2.A.29) family.

It is found in the mitochondrion inner membrane. In terms of biological role, mitochondrial solute carriers shuttle metabolites, nucleotides, and cofactors through the mitochondrial inner membrane. Catalyzes the transport of 2-oxoglutarate across the inner mitochondrial membrane in an electroneutral exchange for malate or other dicarboxylic acids, and plays an important role in several metabolic processes, including the malate-aspartate shuttle, the oxoglutarate/isocitrate shuttle, in gluconeogenesis from lactate, and in nitrogen metabolism. The chain is Probable mitochondrial 2-oxoglutarate/malate carrier protein (ucpC) from Dictyostelium discoideum (Social amoeba).